A 211-amino-acid polypeptide reads, in one-letter code: Ribosomal RNA small subunit methyltransferase G (211 aa).

S-adenosyl-L-methionine contacts are provided by residues Gly75, Leu80, 130–131 (VE), and Arg145.

It belongs to the methyltransferase superfamily. RNA methyltransferase RsmG family.

It is found in the cytoplasm. The catalysed reaction is guanosine(527) in 16S rRNA + S-adenosyl-L-methionine = N(7)-methylguanosine(527) in 16S rRNA + S-adenosyl-L-homocysteine. Its function is as follows. Specifically methylates the N7 position of guanine in position 527 of 16S rRNA. In Aromatoleum aromaticum (strain DSM 19018 / LMG 30748 / EbN1) (Azoarcus sp. (strain EbN1)), this protein is Ribosomal RNA small subunit methyltransferase G.